Here is a 193-residue protein sequence, read N- to C-terminus: ATP-dependent Clp protease proteolytic subunit 2 (193 aa).

Catalysis depends on S98, which acts as the Nucleophile. The active site involves H123.

The protein belongs to the peptidase S14 family. Fourteen ClpP subunits assemble into 2 heptameric rings which stack back to back to give a disk-like structure with a central cavity, resembling the structure of eukaryotic proteasomes.

It is found in the cytoplasm. It carries out the reaction Hydrolysis of proteins to small peptides in the presence of ATP and magnesium. alpha-casein is the usual test substrate. In the absence of ATP, only oligopeptides shorter than five residues are hydrolyzed (such as succinyl-Leu-Tyr-|-NHMec, and Leu-Tyr-Leu-|-Tyr-Trp, in which cleavage of the -Tyr-|-Leu- and -Tyr-|-Trp bonds also occurs).. Cleaves peptides in various proteins in a process that requires ATP hydrolysis. Has a chymotrypsin-like activity. Plays a major role in the degradation of misfolded proteins. This is ATP-dependent Clp protease proteolytic subunit 2 from Bacillus cereus (strain ATCC 14579 / DSM 31 / CCUG 7414 / JCM 2152 / NBRC 15305 / NCIMB 9373 / NCTC 2599 / NRRL B-3711).